Consider the following 141-residue polypeptide: Large ribosomal subunit protein uL11 (141 aa).

It belongs to the universal ribosomal protein uL11 family. As to quaternary structure, part of the ribosomal stalk of the 50S ribosomal subunit. Interacts with L10 and the large rRNA to form the base of the stalk. L10 forms an elongated spine to which L12 dimers bind in a sequential fashion forming a multimeric L10(L12)X complex. One or more lysine residues are methylated.

Its function is as follows. Forms part of the ribosomal stalk which helps the ribosome interact with GTP-bound translation factors. The chain is Large ribosomal subunit protein uL11 from Pelodictyon phaeoclathratiforme (strain DSM 5477 / BU-1).